The chain runs to 339 residues: UDP-N-acetylglucosamine--N-acetylmuramyl-(pentapeptide) pyrophosphoryl-undecaprenol N-acetylglucosamine transferase (339 aa).

UDP-N-acetyl-alpha-D-glucosamine is bound by residues 11–13, Asn-127, Arg-170, Ser-188, Ile-235, and Gln-280; that span reads TGG.

It belongs to the glycosyltransferase 28 family. MurG subfamily.

The protein resides in the cell inner membrane. It catalyses the reaction di-trans,octa-cis-undecaprenyl diphospho-N-acetyl-alpha-D-muramoyl-L-alanyl-D-glutamyl-meso-2,6-diaminopimeloyl-D-alanyl-D-alanine + UDP-N-acetyl-alpha-D-glucosamine = di-trans,octa-cis-undecaprenyl diphospho-[N-acetyl-alpha-D-glucosaminyl-(1-&gt;4)]-N-acetyl-alpha-D-muramoyl-L-alanyl-D-glutamyl-meso-2,6-diaminopimeloyl-D-alanyl-D-alanine + UDP + H(+). It participates in cell wall biogenesis; peptidoglycan biosynthesis. Cell wall formation. Catalyzes the transfer of a GlcNAc subunit on undecaprenyl-pyrophosphoryl-MurNAc-pentapeptide (lipid intermediate I) to form undecaprenyl-pyrophosphoryl-MurNAc-(pentapeptide)GlcNAc (lipid intermediate II). The protein is UDP-N-acetylglucosamine--N-acetylmuramyl-(pentapeptide) pyrophosphoryl-undecaprenol N-acetylglucosamine transferase of Thermotoga sp. (strain RQ2).